A 212-amino-acid chain; its full sequence is Large ribosomal subunit protein uL1 (212 aa).

The protein belongs to the universal ribosomal protein uL1 family. In terms of assembly, part of the 50S ribosomal subunit.

Binds directly to 23S rRNA. Probably involved in E site tRNA release. Its function is as follows. Protein L1 is also a translational repressor protein, it controls the translation of its operon by binding to its mRNA. The chain is Large ribosomal subunit protein uL1 from Methanobrevibacter smithii (strain ATCC 35061 / DSM 861 / OCM 144 / PS).